The sequence spans 491 residues: Probable malate:quinone oxidoreductase (491 aa).

The protein belongs to the MQO family. FAD serves as cofactor.

It carries out the reaction (S)-malate + a quinone = a quinol + oxaloacetate. The protein operates within carbohydrate metabolism; tricarboxylic acid cycle; oxaloacetate from (S)-malate (quinone route): step 1/1. This is Probable malate:quinone oxidoreductase from Actinobacillus pleuropneumoniae serotype 7 (strain AP76).